The chain runs to 208 residues: Large ribosomal subunit protein eL13 (208 aa).

Serine 177 and serine 180 each carry phosphoserine.

This sequence belongs to the eukaryotic ribosomal protein eL13 family. As to quaternary structure, component of the large ribosomal subunit (LSU). Mature yeast ribosomes consist of a small (40S) and a large (60S) subunit. The 40S small subunit contains 1 molecule of ribosomal RNA (18S rRNA) and at least 33 different proteins. The large 60S subunit contains 3 rRNA molecules (25S, 5.8S and 5S rRNA) and at least 46 different proteins.

It is found in the cytoplasm. Component of the ribosome, a large ribonucleoprotein complex responsible for the synthesis of proteins in the cell. The small ribosomal subunit (SSU) binds messenger RNAs (mRNAs) and translates the encoded message by selecting cognate aminoacyl-transfer RNA (tRNA) molecules. The large subunit (LSU) contains the ribosomal catalytic site termed the peptidyl transferase center (PTC), which catalyzes the formation of peptide bonds, thereby polymerizing the amino acids delivered by tRNAs into a polypeptide chain. The nascent polypeptides leave the ribosome through a tunnel in the LSU and interact with protein factors that function in enzymatic processing, targeting, and the membrane insertion of nascent chains at the exit of the ribosomal tunnel. This Schizosaccharomyces pombe (strain 972 / ATCC 24843) (Fission yeast) protein is Large ribosomal subunit protein eL13 (rpl13).